Consider the following 526-residue polypeptide: Na(+)/H(+) antiporter NhaB (526 aa).

A run of 10 helical transmembrane segments spans residues 13-33 (FLGQSPDWYKLAILVFLVVNP), 98-118 (LLLIFMVAGIYFMKQLLLFVF), 133-155 (LAFCFAAALLSAFLDALTVVAVV), 208-228 (LLMHAGVGTALGGVMTMVGEP), 244-264 (FFLRMAPVTLPVFACGLLVCL), 309-329 (ALIGIWLVVALAFHLAEVGLI), 355-375 (EALPFTALLTVFFTVVAVIIE), 395-415 (LALFYLFNGLLSSVSDNVFVG), 452-472 (VATPNGQAAFLFLLTSALAPL), and 481-501 (VWMALPYTVVLTLVGLLCVQF).

Belongs to the NhaB Na(+)/H(+) (TC 2.A.34) antiporter family.

The protein resides in the cell inner membrane. It catalyses the reaction 2 Na(+)(in) + 3 H(+)(out) = 2 Na(+)(out) + 3 H(+)(in). Na(+)/H(+) antiporter that extrudes sodium in exchange for external protons. This chain is Na(+)/H(+) antiporter NhaB, found in Serratia proteamaculans (strain 568).